The chain runs to 147 residues: Leghemoglobin 3 (147 aa).

A Globin domain is found at 2 to 147 (GFTAQQEALV…LATAIKKAMG (146 aa)). Y30 bears the Nitrated tyrosine mark. Residue S45 participates in heme b binding. Position 45 is a phosphoserine (S45). An O2-binding site is contributed by H61. Heme b contacts are provided by K64, H93, and K96. A Nitrated tyrosine modification is found at Y135.

The protein belongs to the plant globin family. As to quaternary structure, monomer. Post-translationally, nitrated in effective nodules and particularly in hypoxic conditions; this mechanism may play a protective role in the symbiosis by buffering toxic peroxynitrite NO(2)(-). Nitration level decrease during nodule senescence. In terms of processing, phosphorylation at Ser-45 disrupts the molecular environment of its porphyrin ring oxygen binding pocket, thus leading to a reduced oxygen consumption and to the delivery of oxygen O(2) to symbiosomes. As to expression, specifically and strongly expressed in root nodules and at low levels in seedlings.

Its subcellular location is the cytoplasm. The protein localises to the cytosol. It is found in the nucleus. In terms of biological role, leghemoglobin that reversibly binds oxygen O(2) through a pentacoordinated heme iron. In root nodules, facilitates the diffusion of oxygen to the bacteroids while preventing the bacterial nitrogenase from being inactivated by buffering dioxygen, nitric oxide and carbon monoxide, and promoting the formation of reactive oxygen species (ROS, e.g. H(2)O(2)). This role is essential for symbiotic nitrogen fixation (SNF). The chain is Leghemoglobin 3 from Lotus japonicus (Lotus corniculatus var. japonicus).